The following is a 150-amino-acid chain: SsrA-binding protein (150 aa).

It belongs to the SmpB family.

The protein localises to the cytoplasm. In terms of biological role, required for rescue of stalled ribosomes mediated by trans-translation. Binds to transfer-messenger RNA (tmRNA), required for stable association of tmRNA with ribosomes. tmRNA and SmpB together mimic tRNA shape, replacing the anticodon stem-loop with SmpB. tmRNA is encoded by the ssrA gene; the 2 termini fold to resemble tRNA(Ala) and it encodes a 'tag peptide', a short internal open reading frame. During trans-translation Ala-aminoacylated tmRNA acts like a tRNA, entering the A-site of stalled ribosomes, displacing the stalled mRNA. The ribosome then switches to translate the ORF on the tmRNA; the nascent peptide is terminated with the 'tag peptide' encoded by the tmRNA and targeted for degradation. The ribosome is freed to recommence translation, which seems to be the essential function of trans-translation. The polypeptide is SsrA-binding protein (Borreliella burgdorferi (strain ATCC 35210 / DSM 4680 / CIP 102532 / B31) (Borrelia burgdorferi)).